We begin with the raw amino-acid sequence, 939 residues long: MNEDQFPKAYDPKSSETGVYSFWERSGMFVANASSEKPAYSIVMPPPNVTGILHMGHALVNTLQDTLIRYKRMQGFEVCWVPGTDHAGIATQTVVERHLKASLGKRRTDFSREEFLKHVWDWKEKSQNVILSQLRQLGCSCDWSRQRFTMDPGANRAVKKAFKILFDKGVIYRGYYLVNWDPILQTALADDEVEYEERDGWLYYIRYQVVNSEEFITVATTRPETLLGDTAIAVSPEDQRYSHLIGAKVVVPFVNREIPIIGDFSVDASFGTGAVKITPAHDKDDYKTGMNHQLPMINILTPTGEINENGGIFTGLSREVARENIITSLEALGLFVKKEAYSSRVGVSYRSGAIIEPYLSKQWFVSVDSFRDSLREFVNSEEIRIFPPEFVRNYLTWVNNLKDWCISRQLWWGHRIPVWHNKHDENVICFDGEGGPEEVMRDPESWYQDPDVLDTWFSSGLWPLTCFGWPDEDSLDLKKFYPTAVLVTGHDILFFWVTRMVLMCSAMVDTEPFSDVFLHGLIFGKSYREYDEKGEWFYVSGERKRDYDKGKALPKNVVAKWEKLSKSKGNVIDPIEMIEAYGADAVRLTLCSCANRGEQIDLDYRLFEEYKNFINKLWNGARFIFGHISELTSRDLEEGVNQDLLGLEDFYILDRFNELLDLIDGHYNCYSFDKIASLAYDFFKNDLCSTYLEIIKPTLFGKQGSDQQRATKRKLLATLLINILGVLHPIVPYITETLFQKLKATLGTVENGKGDSVTGHAVSMLRSEACMVAEYPKPIHVAFPQGLRESFGIAERLVYTIRNIRGEMQLDPREPLQAFVISSEKKELVDVCIPIMCALGGVKTVEQLAEAPKDSIFSLGVVEGIQVGVILPPEHLAKERVRLEKEKTRLEKSIDSVSKLLASEDFRTRANPSLVQAKKDSLRNSQRELQSILDKLASL.

The short motif at 47 to 57 (PNVTGILHMGH) is the 'HIGH' region element. Residues 563-567 (KLSKS) carry the 'KMSKS' region motif. Lys-566 contacts ATP. Residues 874-939 (EHLAKERVRL…QSILDKLASL (66 aa)) are a coiled coil.

It belongs to the class-I aminoacyl-tRNA synthetase family. ValS type 1 subfamily. Monomer.

It is found in the cytoplasm. It carries out the reaction tRNA(Val) + L-valine + ATP = L-valyl-tRNA(Val) + AMP + diphosphate. Its function is as follows. Catalyzes the attachment of valine to tRNA(Val). As ValRS can inadvertently accommodate and process structurally similar amino acids such as threonine, to avoid such errors, it has a 'posttransfer' editing activity that hydrolyzes mischarged Thr-tRNA(Val) in a tRNA-dependent manner. This Chlamydia trachomatis serovar L2b (strain UCH-1/proctitis) protein is Valine--tRNA ligase.